The following is a 242-amino-acid chain: uncharacterized protein (242 aa).

In terms of domain architecture, S4 RNA-binding spans 2–62; that stretch reads EKAYKLLSVQ…VEKPSVIFED (61 aa). Asp93 is a catalytic residue.

This sequence belongs to the pseudouridine synthase RluA family.

It catalyses the reaction a uridine in RNA = a pseudouridine in RNA. This is an uncharacterized protein from Helicobacter pylori (strain J99 / ATCC 700824) (Campylobacter pylori J99).